The chain runs to 216 residues: Octanoyltransferase (216 aa).

The BPL/LPL catalytic domain occupies 35-213; sequence NSNPDFIWIG…TIEEEFNFDF (179 aa). Substrate is bound by residues 77–84, 144–146, and 157–159; these read RGGEVTCH, SIG, and GFS. Cys-175 acts as the Acyl-thioester intermediate in catalysis.

The protein belongs to the LipB family.

Its subcellular location is the cytoplasm. It carries out the reaction octanoyl-[ACP] + L-lysyl-[protein] = N(6)-octanoyl-L-lysyl-[protein] + holo-[ACP] + H(+). It participates in protein modification; protein lipoylation via endogenous pathway; protein N(6)-(lipoyl)lysine from octanoyl-[acyl-carrier-protein]: step 1/2. Catalyzes the transfer of endogenously produced octanoic acid from octanoyl-acyl-carrier-protein onto the lipoyl domains of lipoate-dependent enzymes. Lipoyl-ACP can also act as a substrate although octanoyl-ACP is likely to be the physiological substrate. This is Octanoyltransferase from Prochlorococcus marinus (strain MIT 9301).